Reading from the N-terminus, the 397-residue chain is Acetyl-CoA acetyltransferase, cytosolic (397 aa).

N-acetylmethionine is present on Met1. Cys92 functions as the Acyl-thioester intermediate in the catalytic mechanism. Residue Lys200 is modified to N6-acetyllysine. The CoA site is built by Arg223 and Ser226. 2 positions are modified to N6-acetyllysine: Lys233 and Lys235. Ser252 is a CoA binding site. The Proton donor/acceptor role is filled by Cys383.

Belongs to the thiolase-like superfamily. Thiolase family. Homotetramer.

It is found in the cytoplasm. It localises to the cytosol. It catalyses the reaction 2 acetyl-CoA = acetoacetyl-CoA + CoA. It functions in the pathway lipid metabolism; fatty acid metabolism. In terms of biological role, involved in the biosynthetic pathway of cholesterol. This is Acetyl-CoA acetyltransferase, cytosolic (Acat2) from Mus musculus (Mouse).